The chain runs to 116 residues: Large ribosomal subunit protein bL19 (116 aa).

The protein belongs to the bacterial ribosomal protein bL19 family.

Its function is as follows. This protein is located at the 30S-50S ribosomal subunit interface and may play a role in the structure and function of the aminoacyl-tRNA binding site. This chain is Large ribosomal subunit protein bL19, found in Pseudomonas putida (strain ATCC 700007 / DSM 6899 / JCM 31910 / BCRC 17059 / LMG 24140 / F1).